A 1890-amino-acid polypeptide reads, in one-letter code: DNA polymerase zeta catalytic subunit (1890 aa).

Composition is skewed to polar residues over residues 508–533 and 549–560; these read QENLPDFGSSTKRALPSNPDSQNLRT and PDSSTSNGASEN. Disordered stretches follow at residues 508–565 and 922–942; these read QENL…FRRY and GDSNIDSEKQPLRDNHNDRGA. The span at 922–940 shows a compositional bias: basic and acidic residues; it reads GDSNIDSEKQPLRDNHNDR. Residues Cys1789, Cys1792, Cys1803, and Cys1806 each contribute to the Zn(2+) site. A CysA-type zinc finger spans residues 1789-1806; the sequence is CILCGEVVQESAQLCNRC. The [4Fe-4S] cluster site is built by Cys1835, Cys1838, Cys1851, and Cys1856. The CysB motif motif lies at 1835–1856; sequence CRHCGGGDWVVQSGVKCNSLAC.

This sequence belongs to the DNA polymerase type-B family. Forms DNA polymerase zeta with REV7. [4Fe-4S] cluster is required as a cofactor. As to expression, expressed in roots, leaves and flowers.

It is found in the nucleus. The catalysed reaction is DNA(n) + a 2'-deoxyribonucleoside 5'-triphosphate = DNA(n+1) + diphosphate. Its function is as follows. Catalytic subunit of the error prone DNA polymerase zeta. Involved in damage-tolerance mechanisms through translesion DNA synthesis. This is DNA polymerase zeta catalytic subunit (REV3) from Arabidopsis thaliana (Mouse-ear cress).